Reading from the N-terminus, the 358-residue chain is MATH domain and coiled-coil domain-containing protein At3g58440 (358 aa).

Residues 8–131 (QDKFTWVLEK…NDRLTIVAEV (124 aa)) enclose the MATH domain. A coiled-coil region spans residues 250–309 (LRDAGFKVDWLEKKLDQLKEKKEEEMSGLARLHEIEERLQKLKLLFVDLESQLQKEKVEA).

The sequence is that of MATH domain and coiled-coil domain-containing protein At3g58440 from Arabidopsis thaliana (Mouse-ear cress).